Reading from the N-terminus, the 367-residue chain is Flagellar P-ring protein (367 aa).

An N-terminal signal peptide occupies residues 1 to 21 (MYVFKALAGIVLALVATLAHA).

Belongs to the FlgI family. In terms of assembly, the basal body constitutes a major portion of the flagellar organelle and consists of four rings (L,P,S, and M) mounted on a central rod.

It is found in the periplasm. The protein resides in the bacterial flagellum basal body. Its function is as follows. Assembles around the rod to form the L-ring and probably protects the motor/basal body from shearing forces during rotation. This is Flagellar P-ring protein from Salmonella choleraesuis (strain SC-B67).